The sequence spans 329 residues: GTP 3',8-cyclase (329 aa).

The Radical SAM core domain maps to 8–234; the sequence is AFARKFFYLR…QIRQRSDGPA (227 aa). Residue Arg-17 coordinates GTP. [4Fe-4S] cluster is bound by residues Cys-24 and Cys-28. Tyr-30 lines the S-adenosyl-L-methionine pocket. Cys-31 contributes to the [4Fe-4S] cluster binding site. Position 68 (Arg-68) interacts with GTP. S-adenosyl-L-methionine is bound at residue Gly-72. Position 99 (Thr-99) interacts with GTP. Ser-123 is a binding site for S-adenosyl-L-methionine. A GTP-binding site is contributed by Lys-160. Met-194 provides a ligand contact to S-adenosyl-L-methionine. Residues Cys-257 and Cys-260 each contribute to the [4Fe-4S] cluster site. 262–264 serves as a coordination point for GTP; the sequence is RLR. Cys-274 lines the [4Fe-4S] cluster pocket.

Belongs to the radical SAM superfamily. MoaA family. Monomer and homodimer. [4Fe-4S] cluster is required as a cofactor.

The catalysed reaction is GTP + AH2 + S-adenosyl-L-methionine = (8S)-3',8-cyclo-7,8-dihydroguanosine 5'-triphosphate + 5'-deoxyadenosine + L-methionine + A + H(+). It functions in the pathway cofactor biosynthesis; molybdopterin biosynthesis. In terms of biological role, catalyzes the cyclization of GTP to (8S)-3',8-cyclo-7,8-dihydroguanosine 5'-triphosphate. This Klebsiella pneumoniae (strain 342) protein is GTP 3',8-cyclase.